Reading from the N-terminus, the 147-residue chain is Transcriptional regulator MraZ (147 aa).

2 SpoVT-AbrB domains span residues 6-48 (NFER…NSEE) and 77-120 (TVEV…SKAK).

This sequence belongs to the MraZ family. In terms of assembly, forms oligomers.

It localises to the cytoplasm. Its subcellular location is the nucleoid. The sequence is that of Transcriptional regulator MraZ from Mycoplasmopsis pulmonis (strain UAB CTIP) (Mycoplasma pulmonis).